We begin with the raw amino-acid sequence, 146 residues long: Hemoglobin subunit beta (146 aa).

N-acetylvaline is present on valine 1. Positions 2 to 146 constitute a Globin domain; that stretch reads HLTGEEKSAV…VANALAHKYH (145 aa). Threonine 12 is modified (phosphothreonine). Serine 44 bears the Phosphoserine mark. At lysine 59 the chain carries N6-acetyllysine. Position 63 (histidine 63) interacts with heme b. Position 82 is an N6-acetyllysine (lysine 82). Position 92 (histidine 92) interacts with heme b. Residue cysteine 93 is modified to S-nitrosocysteine. N6-acetyllysine is present on lysine 144.

The protein belongs to the globin family. Heterotetramer of two alpha chains and two beta chains. In terms of tissue distribution, red blood cells.

In terms of biological role, involved in oxygen transport from the lung to the various peripheral tissues. In Saguinus oedipus (Cotton-top tamarin), this protein is Hemoglobin subunit beta (HBB).